An 866-amino-acid polypeptide reads, in one-letter code: DNA topoisomerase 3-beta (866 aa).

In terms of domain architecture, Toprim spans 4-149 (TVLMVAEKPS…RIFRAKFSSV (146 aa)). Mg(2+)-binding residues include Glu-10, Asp-114, and Asp-116. The region spanning 165-585 (SKDEALAVDA…HVLQQFMKKY (421 aa)) is the Topo IA-type catalytic domain. Residues 207–212 (SYGPCQ) form an interaction with DNA region. The active-site O-(5'-phospho-DNA)-tyrosine intermediate is Tyr-329. Over residues 830–853 (MRRGRGRGRGRGRGRGSSRGRRGS) the composition is skewed to basic residues. The tract at residues 830–866 (MRRGRGRGRGRGRGRGSSRGRRGSSRHDDPKMSFRDF) is disordered. The span at 854–866 (SRHDDPKMSFRDF) shows a compositional bias: basic and acidic residues.

This sequence belongs to the type IA topoisomerase family. The cofactor is Mg(2+).

The catalysed reaction is ATP-independent breakage of single-stranded DNA, followed by passage and rejoining.. Functionally, releases the supercoiling and torsional tension of DNA introduced during the DNA replication and transcription by transiently cleaving and rejoining one strand of the DNA duplex. Introduces a single-strand break via transesterification at a target site in duplex DNA. The scissile phosphodiester is attacked by the catalytic tyrosine of the enzyme, resulting in the formation of a DNA-(5'-phosphotyrosyl)-enzyme intermediate and the expulsion of a 3'-OH DNA strand. The free DNA strand than undergoes passage around the unbroken strand thus removing DNA supercoils. Finally, in the religation step, the DNA 3'-OH attacks the covalent intermediate to expel the active-site tyrosine and restore the DNA phosphodiester backbone. This chain is DNA topoisomerase 3-beta (TOP3B), found in Oryza sativa subsp. japonica (Rice).